Consider the following 503-residue polypeptide: MEIRAEEISEIIRKQIKEYGKEVEVAETGTIISVGDGIARIHGLDKAMAGELLEFPGGVSGMVLNLEEDNVGAAILGEDNENIKEGTTVKRTGRIVEVPVGEALIGRVVNAIGQPIDGKGPINTTTFGKVEVKAPGIVKRKSVHQPMQTGLKAIDSMVPIGRGQRELIIGDRQTGKTAVAIDTIINQKGGDLICIYVAIGQKRSTVAQVVSKLQEYGAMDYTIVVSASASEPAPLQFIAPYTGVTMGEYFRDNGKHALIIYDDLSKQAVAYRQLSLLLRRPPGREAYPGDVFYLHSRLLERAAKLSDDCGAGSLTALPIIETQAGDVSAYIPTNVISITDGQIYLESDLFYSGVRPAINVGLSVSRVGGSAQVKAMKQVAGTLRLNLAQYREMAAFAQFGSDLDKATQMQLARGERLVEILKQPQYRPIPNEKQVLVIFAANNGFVDEYPVSSLRRYESELYSFFDSRKADILAELRDKKAIDDDLKAKMIAALEELKKEFTA.

An ATP-binding site is contributed by 170–177 (GDRQTGKT).

This sequence belongs to the ATPase alpha/beta chains family. As to quaternary structure, F-type ATPases have 2 components, CF(1) - the catalytic core - and CF(0) - the membrane proton channel. CF(1) has five subunits: alpha(3), beta(3), gamma(1), delta(1), epsilon(1). CF(0) has three main subunits: a(1), b(2) and c(9-12). The alpha and beta chains form an alternating ring which encloses part of the gamma chain. CF(1) is attached to CF(0) by a central stalk formed by the gamma and epsilon chains, while a peripheral stalk is formed by the delta and b chains.

It localises to the cell inner membrane. It carries out the reaction ATP + H2O + 4 H(+)(in) = ADP + phosphate + 5 H(+)(out). Produces ATP from ADP in the presence of a proton gradient across the membrane. The alpha chain is a regulatory subunit. The sequence is that of ATP synthase subunit alpha from Geobacter sulfurreducens (strain ATCC 51573 / DSM 12127 / PCA).